We begin with the raw amino-acid sequence, 295 residues long: Probable protein phosphatase 2C 6 (295 aa).

Residues 23–294 (QYAATHMQGW…DNMTCILIQF (272 aa)) form the PPM-type phosphatase domain. Residues Asp57, Gly58, Asp237, and Asp285 each contribute to the Mn(2+) site.

It belongs to the PP2C family. Mg(2+) is required as a cofactor. Mn(2+) serves as cofactor.

The protein resides in the membrane. It catalyses the reaction O-phospho-L-seryl-[protein] + H2O = L-seryl-[protein] + phosphate. The catalysed reaction is O-phospho-L-threonyl-[protein] + H2O = L-threonyl-[protein] + phosphate. Functionally, enzyme with a broad specificity. In Paramecium tetraurelia, this protein is Probable protein phosphatase 2C 6.